The primary structure comprises 714 residues: Polyribonucleotide nucleotidyltransferase (714 aa).

Asp-489 and Asp-495 together coordinate Mg(2+). One can recognise a KH domain in the interval 556–615 (PKIDTIKIDVDKIKVVIGKGGETIDKIIAETGVKIDIDEEGNVSIYSSDQDAINRAKEII). In terms of domain architecture, S1 motif spans 625–693 (GEVYHAKVVR…DKGRIDASMK (69 aa)). The segment at 691–714 (SMKALVPRPPKPEKSEAKKEGKHD) is disordered. Positions 700–714 (PKPEKSEAKKEGKHD) are enriched in basic and acidic residues.

This sequence belongs to the polyribonucleotide nucleotidyltransferase family. Requires Mg(2+) as cofactor.

It is found in the cytoplasm. The catalysed reaction is RNA(n+1) + phosphate = RNA(n) + a ribonucleoside 5'-diphosphate. Functionally, involved in mRNA degradation. Catalyzes the phosphorolysis of single-stranded polyribonucleotides processively in the 3'- to 5'-direction. This is Polyribonucleotide nucleotidyltransferase from Streptococcus equi subsp. zooepidemicus (strain H70).